A 201-amino-acid chain; its full sequence is Dephospho-CoA kinase (201 aa).

A DPCK domain is found at 3 to 201; that stretch reads VIGLTGGIAS…WKERIEKNPR (199 aa). Position 11–16 (11–16) interacts with ATP; sequence ASGKST.

This sequence belongs to the CoaE family.

Its subcellular location is the cytoplasm. It carries out the reaction 3'-dephospho-CoA + ATP = ADP + CoA + H(+). It functions in the pathway cofactor biosynthesis; coenzyme A biosynthesis; CoA from (R)-pantothenate: step 5/5. Catalyzes the phosphorylation of the 3'-hydroxyl group of dephosphocoenzyme A to form coenzyme A. The protein is Dephospho-CoA kinase of Geobacter metallireducens (strain ATCC 53774 / DSM 7210 / GS-15).